The primary structure comprises 787 residues: Formate acetyltransferase (787 aa).

Residues 8–629 enclose the PFL domain; it reads NIFEQAWDGF…GNSPVHKGVF (622 aa). Cysteine 416 serves as the catalytic S-acetylcysteine intermediate. Cysteine 417 (cysteine radical intermediate) is an active-site residue. In terms of domain architecture, Glycine radical spans 645–774; sequence SPGANPSNKA…LTERVFHEVL (130 aa). At glycine 749 the chain carries Glycine radical.

The protein belongs to the glycyl radical enzyme (GRE) family. PFL subfamily. As to quaternary structure, homodimer.

It localises to the cytoplasm. It catalyses the reaction formate + acetyl-CoA = pyruvate + CoA. Its pathway is fermentation; pyruvate fermentation; formate from pyruvate: step 1/1. The polypeptide is Formate acetyltransferase (pfl) (Lactococcus lactis subsp. cremoris (strain MG1363)).